We begin with the raw amino-acid sequence, 138 residues long: Cofilin (138 aa).

The 135-residue stretch at 2–136 (SSGVQPTQEC…TKDALFEKAT (135 aa)) folds into the ADF-H domain.

This sequence belongs to the actin-binding proteins ADF family.

The protein localises to the cytoplasm. Its subcellular location is the cytoskeleton. It localises to the nucleus matrix. Its function is as follows. Controls reversibly actin polymerization and depolymerization in a pH-sensitive manner. It has the ability to bind G- and F-actin in a 1:1 ratio of cofilin to actin. Binding to F-actin is regulated by tropomyosin. It is the major component of intranuclear and cytoplasmic actin rods. Required for accumulation of actin at the cell division site via depolymerizing actin at the cell ends. In association with myosin II has a role in the assembly of the contractile ring via severing actin filaments. Involved in the maintenance of the contractile ring once formed. In association with profilin and capping protein, has a role in the mitotic reorganization of the actin cytoskeleton. In Cryptococcus neoformans var. neoformans serotype D (strain B-3501A) (Filobasidiella neoformans), this protein is Cofilin (COF1).